The chain runs to 636 residues: 1-deoxy-D-xylulose-5-phosphate synthase (636 aa).

Residues H72 and 113-115 (GHA) contribute to the thiamine diphosphate site. Residue D144 coordinates Mg(2+). Thiamine diphosphate-binding positions include 145–146 (GA), N174, Y287, and E370. Residue N174 coordinates Mg(2+).

This sequence belongs to the transketolase family. DXPS subfamily. As to quaternary structure, homodimer. It depends on Mg(2+) as a cofactor. Thiamine diphosphate serves as cofactor.

It carries out the reaction D-glyceraldehyde 3-phosphate + pyruvate + H(+) = 1-deoxy-D-xylulose 5-phosphate + CO2. Its pathway is metabolic intermediate biosynthesis; 1-deoxy-D-xylulose 5-phosphate biosynthesis; 1-deoxy-D-xylulose 5-phosphate from D-glyceraldehyde 3-phosphate and pyruvate: step 1/1. In terms of biological role, catalyzes the acyloin condensation reaction between C atoms 2 and 3 of pyruvate and glyceraldehyde 3-phosphate to yield 1-deoxy-D-xylulose-5-phosphate (DXP). This is 1-deoxy-D-xylulose-5-phosphate synthase from Crocosphaera subtropica (strain ATCC 51142 / BH68) (Cyanothece sp. (strain ATCC 51142)).